The following is a 1099-amino-acid chain: Solute carrier family 12 member 1 (1099 aa).

The Cytoplasmic segment spans residues 1–177 (MSLNNSSNVF…EDDQAGVVKF (177 aa)). Residues 20-23 (RFQV) carry the RFXV motif motif. The disordered stretch occupies residues 31-53 (ESSAAADDNTDPPHYEETSFGDE). S61 is modified (phosphoserine). S91 carries the post-translational modification Phosphoserine; by OXSR1 and STK39. At T95 the chain carries Phosphothreonine. A phosphothreonine; by OXSR1 and STK39 mark is found at T100 and T105. T118 bears the Phosphothreonine mark. Residue S120 is modified to Phosphoserine. S130 carries the post-translational modification Phosphoserine; by AMPK. Position 148 is a phosphoserine (S148). A helical membrane pass occupies residues 178 to 198 (GWVKGVLVRCMLNIWGVMLFI). Topologically, residues 199 to 201 (RLS) are extracellular. A helical membrane pass occupies residues 202-222 (WIVGEAGIGLGVLIILLSTMV). Over 223 to 259 (TSITGLSTSAIATNGFVRGGGAYYLISRSLGPEFGGS) the chain is Cytoplasmic. The helical transmembrane segment at 260 to 280 (IGLIFAFANAVAVAMYVVGFA) threads the bilayer. At 281-302 (ETVVDLLKESDSMMVDPTNDIR) the chain is on the extracellular side. A helical membrane pass occupies residues 303 to 323 (IIGSITVVILLGISVAGMEWE). The Cytoplasmic segment spans residues 324–327 (AKAQ). The helical transmembrane segment at 328-348 (VILLVILLIAIANFFIGTVIP) threads the bilayer. Residues 349–379 (SNNEKKSRGFFNYQASIFAENFGPRFTKGEG) lie on the Extracellular side of the membrane. A helical transmembrane segment spans residues 380–400 (FFSVFAIFFPAATGILAGANI). Topologically, residues 401-417 (SGDLEDPQDAIPRGTML) are cytoplasmic. A helical membrane pass occupies residues 418–438 (AIFITTVAYLGVAICVGACVV). Topologically, residues 439-550 (RDATGNMNDT…NNEPLRGYIL (112 aa)) are extracellular. N-linked (GlcNAc...) asparagine glycans are attached at residues N446 and N456. 2 consecutive transmembrane segments (helical) span residues 551 to 571 (TFLI…APII) and 572 to 592 (SNFF…ASYA). Residues 593 to 609 (KSPGWRPAYGIYNMWVS) lie on the Extracellular side of the membrane. Residues 610–630 (LFGAVLCCAVMFVINWWAAVI) form a helical membrane-spanning segment. The Cytoplasmic portion of the chain corresponds to 631–1099 (TYVIEFFLYV…NHKNVLTFYS (469 aa)).

It belongs to the SLC12A transporter family. As to quaternary structure, when phosphorylated, interacts with PPP3CB. Post-translationally, phosphorylated at Ser-91, Thr-100 and Thr-105 by OXSR1/OSR1 and STK39/SPAK downstream of WNK kinases (WNK1, WNK2, WNK3 or WNK4), promoting its activity. In terms of tissue distribution, kidney; localizes to the thick ascending limbs (at protein level).

The protein localises to the apical cell membrane. It carries out the reaction K(+)(out) + 2 chloride(out) + Na(+)(out) = K(+)(in) + 2 chloride(in) + Na(+)(in). With respect to regulation, activated following phosphorylation by OXSR1/OSR1 and STK39/SPAK downstream of WNK kinases (WNK1, WNK2, WNK3 or WNK4). Functionally, renal sodium, potassium and chloride ion cotransporter that mediates the transepithelial NaCl reabsorption in the thick ascending limb and plays an essential role in the urinary concentration and volume regulation. Electrically silent transporter system. The protein is Solute carrier family 12 member 1 (SLC12A1) of Homo sapiens (Human).